A 550-amino-acid chain; its full sequence is Crystal protein (550 aa).

A signal peptide spans Met1–Ala19. A disulfide bond links Cys91 and Cys111. Residue Asn156 is glycosylated (N-linked (GlcNAc...) asparagine). Ser215 acts as the Acyl-ester intermediate in catalysis. A disulfide bridge links Cys267 with Cys274. Active-site charge relay system residues include Glu340 and His443. A glycan (N-linked (GlcNAc...) asparagine) is linked at Asn506.

Belongs to the type-B carboxylesterase/lipase family.

The protein resides in the cytoplasmic vesicle. Its subcellular location is the esterosome membrane. The chain is Crystal protein (cryS) from Dictyostelium discoideum (Social amoeba).